We begin with the raw amino-acid sequence, 130 residues long: Small ribosomal subunit protein uS9 (130 aa).

This sequence belongs to the universal ribosomal protein uS9 family.

The chain is Small ribosomal subunit protein uS9 from Clostridioides difficile (strain 630) (Peptoclostridium difficile).